The following is a 420-amino-acid chain: Glucose-1-phosphate adenylyltransferase (420 aa).

Alpha-D-glucose 1-phosphate-binding positions include Tyr-107, Gly-172, 187–188, and Ser-205; that span reads EK.

The protein belongs to the bacterial/plant glucose-1-phosphate adenylyltransferase family. As to quaternary structure, homotetramer.

The catalysed reaction is alpha-D-glucose 1-phosphate + ATP + H(+) = ADP-alpha-D-glucose + diphosphate. It participates in glycan biosynthesis; glycogen biosynthesis. In terms of biological role, involved in the biosynthesis of ADP-glucose, a building block required for the elongation reactions to produce glycogen. Catalyzes the reaction between ATP and alpha-D-glucose 1-phosphate (G1P) to produce pyrophosphate and ADP-Glc. In Rhodopseudomonas palustris (strain ATCC BAA-98 / CGA009), this protein is Glucose-1-phosphate adenylyltransferase.